A 263-amino-acid polypeptide reads, in one-letter code: Small ribosomal subunit protein uS15m (263 aa).

Residues 1 to 70 (MVLKSVFRST…VRQYARPSRK (70 aa)) constitute a mitochondrion transit peptide. The segment covering 238–251 (EREKQKAEEAERKK) has biased composition (basic and acidic residues). The segment at 238–263 (EREKQKAEEAERKKSSSSTNPQETAA) is disordered.

This sequence belongs to the universal ribosomal protein uS15 family. In terms of assembly, component of the mitochondrial ribosome small subunit (28S) which comprises a 12S rRNA and about 30 distinct proteins.

The protein localises to the mitochondrion. The chain is Small ribosomal subunit protein uS15m (mrps15) from Danio rerio (Zebrafish).